A 331-amino-acid chain; its full sequence is Ubiquinone biosynthesis protein UbiU (331 aa).

Cys-169, Cys-176, Cys-193, and Cys-232 together coordinate [4Fe-4S] cluster.

It belongs to the peptidase U32 family. UbiU subfamily. In terms of assembly, forms a heterodimer with UbiV. Requires [4Fe-4S] cluster as cofactor.

The protein operates within cofactor biosynthesis; ubiquinone biosynthesis. In terms of biological role, required for O(2)-independent ubiquinone (coenzyme Q) biosynthesis. Together with UbiV, is essential for the C6-hydroxylation reaction in the oxygen-independent ubiquinone biosynthesis pathway. This is Ubiquinone biosynthesis protein UbiU from Escherichia coli (strain K12).